Here is a 33-residue protein sequence, read N- to C-terminus: Gaegurin-1 (33 aa).

An intrachain disulfide couples Cys-27 to Cys-33.

Belongs to the frog skin active peptide (FSAP) family. Brevinin subfamily. In terms of assembly, monomer. In terms of tissue distribution, expressed by the skin glands.

It localises to the secreted. Functionally, has a non-hemolytic activity. Has a broad spectrum of activity against both Gram-positive and Gram-negative bacteria, fungi and protozoa. The polypeptide is Gaegurin-1 (GGN1) (Glandirana rugosa (Japanese wrinkled frog)).